The following is a 117-amino-acid chain: Iron-sulfur cluster insertion protein ErpA (117 aa).

Positions 45, 109, and 111 each coordinate iron-sulfur cluster.

The protein belongs to the HesB/IscA family. In terms of assembly, homodimer. Requires iron-sulfur cluster as cofactor.

Its function is as follows. Required for insertion of 4Fe-4S clusters for at least IspG. This Blochmanniella pennsylvanica (strain BPEN) protein is Iron-sulfur cluster insertion protein ErpA.